A 400-amino-acid polypeptide reads, in one-letter code: Probable peptidoglycan D,D-transpeptidase PenA (400 aa).

The tract at residues 1–21 (NIDGKGQEGLELSREDSLRGE) is disordered. The Acyl-ester intermediate role is filled by Ser-128.

It belongs to the transpeptidase family. FtsI subfamily.

It is found in the cell inner membrane. It carries out the reaction Preferential cleavage: (Ac)2-L-Lys-D-Ala-|-D-Ala. Also transpeptidation of peptidyl-alanyl moieties that are N-acyl substituents of D-alanine.. It participates in cell wall biogenesis; peptidoglycan biosynthesis. Catalyzes cross-linking of the peptidoglycan cell wall at the division septum. In Neisseria flavescens, this protein is Probable peptidoglycan D,D-transpeptidase PenA.